A 103-amino-acid polypeptide reads, in one-letter code: Glutaredoxin-C1 (103 aa).

The Glutaredoxin domain occupies 1 to 102 (MDRVNRLAAQ…PLLRNAGALW (102 aa)). Cysteines 21 and 24 form a disulfide.

Belongs to the glutaredoxin family. CC-type subfamily.

The protein localises to the cytoplasm. In terms of biological role, has a glutathione-disulfide oxidoreductase activity in the presence of NADPH and glutathione reductase. Reduces low molecular weight disulfides and proteins. The sequence is that of Glutaredoxin-C1 (GRXC1) from Oryza sativa subsp. japonica (Rice).